The sequence spans 91 residues: MEATLEQHLEDTMKNPSIVGVLCTDSQGLNLGCRGTLSDEHAGVISVLAQQAAKLTSDPTDIPVVCLESDNGNIMIQKHDGITVAVHKMAS.

Residue Met-1 is modified to N-acetylmethionine.

This sequence belongs to the LAMTOR5 family. In terms of assembly, homodimer. Part of the Ragulator complex composed of LAMTOR1, LAMTOR2, LAMTOR3, LAMTOR4 and LAMTOR5. LAMTOR4 and LAMTOR5 form a heterodimer that interacts, through LAMTOR1, with a LAMTOR2, LAMTOR3 heterodimer. The Ragulator complex interacts with both the mTORC1 complex and heterodimers constituted of the Rag GTPases RagA/RRAGA, RagB/RRAGB, RagC/RRAGC and RagD/RRAGD; regulated by amino acid availability. The Ragulator complex interacts with SLC38A9; the probable amino acid sensor. Component of the lysosomal folliculin complex (LFC), composed of FLCN, FNIP1 (or FNIP2), RagA/RRAGA or RagB/RRAGB GDP-bound, RagC/RRAGC or RagD/RRAGD GTP-bound, and Ragulator. Interacts with phosphorylated BIRC5; the resulting complex binds pro-caspase-9, as well as active caspase-9, but much less efficiently. Interacts with SUPV3L1.

The protein resides in the lysosome. Its subcellular location is the cytoplasm. It is found in the cytosol. As part of the Ragulator complex it is involved in amino acid sensing and activation of mTORC1, a signaling complex promoting cell growth in response to growth factors, energy levels, and amino acids. Activated by amino acids through a mechanism involving the lysosomal V-ATPase, the Ragulator plays a dual role for the small GTPases Rag (RagA/RRAGA, RagB/RRAGB, RagC/RRAGC and/or RagD/RRAGD): it (1) acts as a guanine nucleotide exchange factor (GEF), activating the small GTPases Rag and (2) mediates recruitment of Rag GTPases to the lysosome membrane. Activated Ragulator and Rag GTPases function as a scaffold recruiting mTORC1 to lysosomes where it is in turn activated. When complexed to BIRC5, interferes with apoptosome assembly, preventing recruitment of pro-caspase-9 to oligomerized APAF1, thereby selectively suppressing apoptosis initiated via the mitochondrial/cytochrome c pathway. In Bos taurus (Bovine), this protein is Ragulator complex protein LAMTOR5 (LAMTOR5).